A 405-amino-acid chain; its full sequence is Cystathionine gamma-lyase (405 aa).

Substrate contacts are provided by Arg62, Tyr114, and Arg119. At Lys212 the chain carries N6-(pyridoxal phosphate)lysine. Glu339 provides a ligand contact to substrate.

The protein belongs to the trans-sulfuration enzymes family. Homotetramer. Interacts with CALM in a calcium-dependent manner. Pyridoxal 5'-phosphate serves as cofactor.

It is found in the cytoplasm. It catalyses the reaction L,L-cystathionine + H2O = 2-oxobutanoate + L-cysteine + NH4(+). The catalysed reaction is L-cysteine + H2O = hydrogen sulfide + pyruvate + NH4(+) + H(+). The enzyme catalyses L-homocysteine + H2O = 2-oxobutanoate + hydrogen sulfide + NH4(+) + H(+). It carries out the reaction L-homoserine = 2-oxobutanoate + NH4(+). It catalyses the reaction L-selenocystathionine + H2O = L-selenocysteine + 2-oxobutanoate + NH4(+). It functions in the pathway amino-acid biosynthesis; L-cysteine biosynthesis; L-cysteine from L-homocysteine and L-serine: step 2/2. Catalyzes the last step in the trans-sulfuration pathway from L-methionine to L-cysteine in a pyridoxal-5'-phosphate (PLP)-dependent manner, which consists on cleaving the L,L-cystathionine molecule into L-cysteine, ammonia and 2-oxobutanoate. Part of the L-cysteine derived from the trans-sulfuration pathway is utilized for biosynthesis of the ubiquitous antioxidant glutathione. Besides its role in the conversion of L-cystathionine into L-cysteine, it utilizes L-cysteine and L-homocysteine as substrates (at much lower rates than L,L-cystathionine) to produce hydrogen sulfide (H2S). In vitro, it converts two L-cysteine molecules into lanthionine and H2S, and two L-homocysteine molecules to homolanthionine and H2S, which can be particularly relevant under conditions of severe hyperhomocysteinemia. Lanthionine and homolanthionine are structural homologs of L,L-cystathionine that differ by the absence or presence of an extra methylene group, respectively. Acts as a cysteine-protein sulfhydrase by mediating sulfhydration of target proteins: sulfhydration consists of converting -SH groups into -SSH on specific cysteine residues of target proteins such as GAPDH, PTPN1 and NF-kappa-B subunit RELA, thereby regulating their function. By generating the gasotransmitter H2S, it participates in a number of physiological processes such as vasodilation, bone protection, and inflammation. Plays an essential role in myogenesis by contributing to the biogenesis of H2S in skeletal muscle tissue. Can also accept homoserine as substrate. Catalyzes the elimination of selenocystathionine (which can be derived from the diet) to yield selenocysteine, ammonia and 2-oxobutanoate. The sequence is that of Cystathionine gamma-lyase (CTH) from Sus scrofa (Pig).